The primary structure comprises 108 residues: UPF0166 protein MJ1524 (108 aa).

The protein belongs to the UPF0166 family.

In Methanocaldococcus jannaschii (strain ATCC 43067 / DSM 2661 / JAL-1 / JCM 10045 / NBRC 100440) (Methanococcus jannaschii), this protein is UPF0166 protein MJ1524.